We begin with the raw amino-acid sequence, 122 residues long: Large ribosomal subunit protein uL18 (122 aa).

This sequence belongs to the universal ribosomal protein uL18 family. Part of the 50S ribosomal subunit; part of the 5S rRNA/L5/L18/L25 subcomplex. Contacts the 5S and 23S rRNAs.

Functionally, this is one of the proteins that bind and probably mediate the attachment of the 5S RNA into the large ribosomal subunit, where it forms part of the central protuberance. The sequence is that of Large ribosomal subunit protein uL18 from Ruminiclostridium cellulolyticum (strain ATCC 35319 / DSM 5812 / JCM 6584 / H10) (Clostridium cellulolyticum).